A 241-amino-acid polypeptide reads, in one-letter code: Co-chaperone protein p23-1 (241 aa).

The region spanning 2-91 (SRHPEVKWAE…AEPERWNKLL (90 aa)) is the CS domain. 17 MGG repeats span residues 129–131 (MGG), 132–134 (MGG), 135–137 (MGG), 138–140 (MGG), 141–143 (MGG), 144–146 (MGG), 147–149 (MGG), 150–152 (MGG), 162–164 (MGG), 165–167 (MGG), 168–170 (MGG), 171–173 (MGG), 180–182 (MGG), 183–185 (MGG), 186–188 (MGG), 189–191 (MGG), and 192–194 (MGG). The tract at residues 129-194 (MGGMGGMGGM…GMGGMGGMGG (66 aa)) is 17 X 3 AA repeats of M-G-G. Positions 188 to 241 (GMGGMGGMEEFEDSDDEEETAKSGDKKDDAVKEEGLATEKAPAAEETTSVKEDK) are disordered. Residues 196–206 (EEFEDSDDEEE) are compositionally biased toward acidic residues. Over residues 207–224 (TAKSGDKKDDAVKEEGLA) the composition is skewed to basic and acidic residues. A compositionally biased stretch (low complexity) spans 225–234 (TEKAPAAEET).

The protein belongs to the p23/wos2 family. In terms of assembly, interacts with HSP90 in an ATP-dependent manner. Interacts with HSP90-5, HSP90-6 and HSP90-7. Widely expressed but preferentially in the root meristem.

The protein resides in the cytoplasm. It localises to the nucleus. Functionally, acts as a co-chaperone for HSP90. Controls root development through the modulation of auxin distribution in the root meristem. This Arabidopsis thaliana (Mouse-ear cress) protein is Co-chaperone protein p23-1.